A 363-amino-acid polypeptide reads, in one-letter code: uncharacterized protein (363 aa).

A coiled-coil region spans residues 109–329 (RAALRELRSR…VEELQAQTRE (221 aa)).

This is an uncharacterized protein from Homo sapiens (Human).